The following is a 1241-amino-acid chain: Interphotoreceptor matrix proteoglycan 2 (1241 aa).

Positions 1–28 are cleaved as a signal peptide; the sequence is MIMFLPLGRISLGILILFLTGGNLVSVS. Over 29–1104 the chain is Extracellular; it reads EEIQDRMHAV…CEEFVSEPFV (1076 aa). Residue T193 is glycosylated (O-linked (GalNAc...) threonine). A disordered region spans residues 206 to 234; it reads AASERSAASPQESISNEIENVTEQPTPPA. A compositionally biased stretch (polar residues) spans 211 to 229; sequence SAASPQESISNEIENVTEQ. An N-linked (GlcNAc...) asparagine glycan is attached at N225. A glycan (O-linked (GalNAc...) threonine) is linked at T231. The region spanning 235 to 349 is the SEA 1 domain; that stretch reads AEQIAEFSIQ…KPTAVYTISN (115 aa). The hyaluronan-binding motif involved in chondroitin sulfate A-binding stretch occupies residues 255–263; the sequence is RDPSSALYR. N297, N316, and N366 each carry an N-linked (GlcNAc...) asparagine glycan. O-linked (GalNAc...) threonine glycosylation is found at T429, T430, and T431. Positions 431–443 are enriched in low complexity; the sequence is TISPFGFSSGPPS. Disordered stretches follow at residues 431 to 456 and 500 to 520; these read TISPFGFSSGPPSATGRELHSESTLG and VAPEGRTSGSSILEDDNTEES. T817 is a glycosylation site (O-linked (GalNAc...) threonine). Residues N841, N945, and N959 are each glycosylated (N-linked (GlcNAc...) asparagine). The region spanning 900-1013 is the SEA 2 domain; sequence GALVVFFSLR…YSLDVESGDD (114 aa). EGF-like domains lie at 1013 to 1054 and 1055 to 1096; these read DANP…LPCQ and SVCD…QHCE. 6 disulfide bridges follow: C1017–C1028, C1022–C1039, C1041–C1053, C1057–C1070, C1064–C1080, and C1082–C1095. Positions 1083–1091 are hyaluronan-binding motif involved in chondroitin sulfate C-binding; sequence RVGSNWWYR. Residues 1105–1125 traverse the membrane as a helical segment; it reads IGITIASVVSLLLVASAVVFF. Residues 1126–1241 are Cytoplasmic-facing; that stretch reads LAKMLQAQNV…FVREHEMEEL (116 aa). Residues 1128 to 1136 form a hyaluronan-binding motif involved in chondroitin sulfate A- and C-binding region; sequence KMLQAQNVR. The hyaluronan-binding motif involved in chondroitin sulfate C-binding stretch occupies residues 1139–1145; it reads RQRPTNR. Positions 1210 to 1218 are hyaluronan-binding motif involved in chondroitin sulfate A- and C-binding motif; the sequence is KEEIQERMR.

In terms of tissue distribution, expressed in the pineal gland and the outer layer of the retina.

The protein localises to the photoreceptor outer segment membrane. It is found in the photoreceptor inner segment membrane. Its subcellular location is the secreted. It localises to the extracellular space. The protein resides in the extracellular matrix. The protein localises to the interphotoreceptor matrix. In terms of biological role, chondroitin sulfate- and hyaluronan-binding proteoglycan involved in the organization of interphotoreceptor matrix; may participate in the maturation and maintenance of the light-sensitive photoreceptor outer segment. Binds heparin. The protein is Interphotoreceptor matrix proteoglycan 2 (Impg2) of Rattus norvegicus (Rat).